A 77-amino-acid chain; its full sequence is MEKLTILLLVAAVLMSTQAMFQGGGEKRPKDKIKFLSKRKTNAESWWEGECLGWSNGCTQPSDCCSNNCKGRNCDIW.

An N-terminal signal peptide occupies residues 1 to 19 (MEKLTILLLVAAVLMSTQA). The propeptide occupies 20-37 (MFQGGGEKRPKDKIKFLS). 3 disulfide bridges follow: C51–C65, C58–C69, and C64–C74.

The protein belongs to the conotoxin O2 superfamily. Expressed by the venom duct.

It localises to the secreted. Its function is as follows. Inhibits voltage-gated ion channels. The sequence is that of Conotoxin Vc6.14 from Conus victoriae (Queen Victoria cone).